The sequence spans 681 residues: Probable L-type lectin-domain containing receptor kinase VII.2 (681 aa).

The signal sequence occupies residues 1–23 (MFSKVSILLFSLASLLLFRSTTG). A legume-lectin like region spans residues 24 to 260 (IEFIYNSNFT…SHRILSWSFS (237 aa)). Over 24–290 (IEFIYNSNFT…SGDSVLKSKG (267 aa)) the chain is Extracellular. 9 N-linked (GlcNAc...) asparagine glycosylation sites follow: Asn-31, Asn-42, Asn-56, Asn-72, Asn-126, Asn-202, Asn-207, Asn-228, and Asn-263. Residues 291–311 (FIAGVSSGVVLLVSVIGLLCF) form a helical membrane-spanning segment. Topologically, residues 312–681 (YVVRRRRQRL…QTYDSILHGR (370 aa)) are cytoplasmic. One can recognise a Protein kinase domain in the interval 349-624 (FSDENMIGYG…VVQILEQGRL (276 aa)). ATP is bound by residues 355-363 (IGYGGNSKV) and Lys-376. Asp-475 serves as the catalytic Proton acceptor.

In the C-terminal section; belongs to the protein kinase superfamily. Ser/Thr protein kinase family. This sequence in the N-terminal section; belongs to the leguminous lectin family.

The protein localises to the cell membrane. It carries out the reaction L-seryl-[protein] + ATP = O-phospho-L-seryl-[protein] + ADP + H(+). The enzyme catalyses L-threonyl-[protein] + ATP = O-phospho-L-threonyl-[protein] + ADP + H(+). The chain is Probable L-type lectin-domain containing receptor kinase VII.2 (LECRK72) from Arabidopsis thaliana (Mouse-ear cress).